The primary structure comprises 286 residues: NAD kinase (286 aa).

The active-site Proton acceptor is aspartate 74. Residues 74–75 (DG), 148–149 (ND), aspartate 178, alanine 186, 189–194 (TAYNLS), and glutamine 244 contribute to the NAD(+) site.

Belongs to the NAD kinase family. It depends on a divalent metal cation as a cofactor.

The protein localises to the cytoplasm. It carries out the reaction NAD(+) + ATP = ADP + NADP(+) + H(+). Its function is as follows. Involved in the regulation of the intracellular balance of NAD and NADP, and is a key enzyme in the biosynthesis of NADP. Catalyzes specifically the phosphorylation on 2'-hydroxyl of the adenosine moiety of NAD to yield NADP. This chain is NAD kinase, found in Campylobacter jejuni subsp. jejuni serotype O:6 (strain 81116 / NCTC 11828).